The following is a 274-amino-acid chain: Large ribosomal subunit protein uL2cz/uL2cy (274 aa).

Disordered stretches follow at residues Met1–Gln21 and Pro225–Gly254.

The protein belongs to the universal ribosomal protein uL2 family. Part of the 50S ribosomal subunit.

The protein localises to the plastid. It is found in the chloroplast. This is Large ribosomal subunit protein uL2cz/uL2cy (rpl2-A) from Draba nemorosa (Woodland whitlowgrass).